Here is a 136-residue protein sequence, read N- to C-terminus: DNA-directed RNA polymerase subunit omega (136 aa).

The interval 81 to 136 (EAEAVPLLSSSPAAAAVAPQSSGDDGDIQFDRMSEEDLLRGLENLAPPTETEDEGD) is disordered. Positions 83-99 (EAVPLLSSSPAAAAVAP) are enriched in low complexity. Positions 109–120 (QFDRMSEEDLLR) are enriched in basic and acidic residues.

This sequence belongs to the RNA polymerase subunit omega family. The RNAP catalytic core consists of 2 alpha, 1 beta, 1 beta' and 1 omega subunit. When a sigma factor is associated with the core the holoenzyme is formed, which can initiate transcription.

The catalysed reaction is RNA(n) + a ribonucleoside 5'-triphosphate = RNA(n+1) + diphosphate. In terms of biological role, promotes RNA polymerase assembly. Latches the N- and C-terminal regions of the beta' subunit thereby facilitating its interaction with the beta and alpha subunits. This Methylobacterium nodulans (strain LMG 21967 / CNCM I-2342 / ORS 2060) protein is DNA-directed RNA polymerase subunit omega.